Here is a 351-residue protein sequence, read N- to C-terminus: Photosystem II D2 protein (351 aa).

Residues 39 to 59 (CAYLAVGGWLTGTTFVTSWYT) traverse the membrane as a helical segment. A chlorophyll a-binding site is contributed by His116. Residues 123–139 (GFCLRQFEIARLVGLRP) form a helical membrane-spanning segment. Pheophytin a is bound by residues Gln128 and Asn141. A helical transmembrane segment spans residues 151–164 (VFVSVFLMYPLGQA). His196 serves as a coordination point for chlorophyll a. Residues 206 to 226 (GALLCAIHGATVQNTLFEDGD) form a helical membrane-spanning segment. A plastoquinone-binding residues include His213 and Phe260. Residue His213 coordinates Fe cation. His267 provides a ligand contact to Fe cation. Residues 277–293 (GLWTSAFGIVGLALNLR) form a helical membrane-spanning segment.

It belongs to the reaction center PufL/M/PsbA/D family. PSII is composed of 1 copy each of membrane proteins PsbA, PsbB, PsbC, PsbD, PsbE, PsbF, PsbH, PsbI, PsbJ, PsbK, PsbL, PsbM, PsbT, PsbX, PsbY, PsbZ, Psb30/Ycf12, at least 3 peripheral proteins of the oxygen-evolving complex and a large number of cofactors. It forms dimeric complexes. The D1/D2 heterodimer binds P680, chlorophylls that are the primary electron donor of PSII, and subsequent electron acceptors. It shares a non-heme iron and each subunit binds pheophytin, quinone, additional chlorophylls, carotenoids and lipids. There is also a Cl(-1) ion associated with D1 and D2, which is required for oxygen evolution. The PSII complex binds additional chlorophylls, carotenoids and specific lipids. serves as cofactor.

It is found in the plastid. The protein resides in the chloroplast thylakoid membrane. It catalyses the reaction 2 a plastoquinone + 4 hnu + 2 H2O = 2 a plastoquinol + O2. In terms of biological role, photosystem II (PSII) is a light-driven water:plastoquinone oxidoreductase that uses light energy to abstract electrons from H(2)O, generating O(2) and a proton gradient subsequently used for ATP formation. It consists of a core antenna complex that captures photons, and an electron transfer chain that converts photonic excitation into a charge separation. The D1/D2 (PsbA/PsbD) reaction center heterodimer binds P680, the primary electron donor of PSII as well as several subsequent electron acceptors. D2 is needed for assembly of a stable PSII complex. This is Photosystem II D2 protein from Porphyra purpurea (Red seaweed).